An 876-amino-acid polypeptide reads, in one-letter code: MTDIDARLREDVHLLGELLGNTIRDQYGEAFLDKIEQIRKGAKADRRGSMDAELSASLNQLSEDELLPVARAFNQFLNLANIAEQYQLIHRREETQAAPFESRVLPELLARLRNEGHSAESLARQLARLEIELVLTAHPTEVARRTLIQKYDAIAAQLAAQDHRDLTTAEREQIHNTLQRLIAEAWHTEEIRRTRPTPVDEAKWGFAVIEHSLWQAIPHHMRKADQALFAATGLRLPLEAAPIRFASWMGGDRDGNPNVTAAVTREVLLLARWMAADLYLRDVDHLAAELSMQQASDALKARAGDSAEPYRAVLKQLRERLRATRNWAHASLTATTPAPADVLHNNRDLLDPLELCFNSLHECGMGVIADGPLLDCLRRAVTFGLFLVRLDVRQDSSRHSAAMTEITDYLGLGKYEEWDEEQRISFLTRELQNRRPLLPAHFKPSADTAEVLATCKEIAAAPGASLGSYVISMAGAASDVLAVQLLLKESGVLRPMRVVPLFETLADLDNAGPVIERLLLLPGYRARLQGPQEVMIGYSDSAKDAGTTAAAWAQYRAQERLVEICREQQVELLLFHGRGGTVGRGGGPAHAAILSQPPGSVAGRFRTTEQGEMIRFKFGLPDIAEQNLNLYLAAVLEATLLPPPPPTPEWRHLMDELAADGVAAYRAVVRENPQFVEYFRQSTPEQELGRLPLGSRPAKRRAGGIESLRAIPWIFGWTQTRLMLPAWLGWETALSKALERGEGELLGQMREQWPFFRTRIDMLEMVLAKADADIALSYDERLVEPDLLPLGAHLRDLLSQACSVVLGLTGQSQLLAHSPDTLEFIRLRNTYLDPLHLLQAELLARSRRQNVEQGSPVEQALLVSVAGIAAGLRNTG.

Catalysis depends on residues H138 and K543.

This sequence belongs to the PEPCase type 1 family. Mg(2+) serves as cofactor.

The catalysed reaction is oxaloacetate + phosphate = phosphoenolpyruvate + hydrogencarbonate. Functionally, forms oxaloacetate, a four-carbon dicarboxylic acid source for the tricarboxylic acid cycle. This chain is Phosphoenolpyruvate carboxylase, found in Pseudomonas fluorescens (strain Pf0-1).